We begin with the raw amino-acid sequence, 435 residues long: Serine/threonine-protein kinase 40 (435 aa).

The 298-residue stretch at 35–332 (FILGPRLGNS…EELDSLSSII (298 aa)) folds into the Protein kinase domain. ATP-binding positions include 41–49 (LGNSPVPSI) and Lys66. The Proton acceptor role is filled by Asp197.

It belongs to the protein kinase superfamily. CAMK Ser/Thr protein kinase family.

Its subcellular location is the nucleus. The protein resides in the cytoplasm. It catalyses the reaction L-seryl-[protein] + ATP = O-phospho-L-seryl-[protein] + ADP + H(+). It carries out the reaction L-threonyl-[protein] + ATP = O-phospho-L-threonyl-[protein] + ADP + H(+). In terms of biological role, may be a negative regulator of NF-kappa-B and p53-mediated gene transcription. In Gallus gallus (Chicken), this protein is Serine/threonine-protein kinase 40 (STK40).